A 522-amino-acid polypeptide reads, in one-letter code: Maturase K (522 aa).

It belongs to the intron maturase 2 family. MatK subfamily.

It localises to the plastid. It is found in the chloroplast. Functionally, usually encoded in the trnK tRNA gene intron. Probably assists in splicing its own and other chloroplast group II introns. In Micranthus junceus (Micranthus plantagineus var. junceus), this protein is Maturase K.